The chain runs to 236 residues: 3-deoxy-D-manno-octulosonic acid kinase (236 aa).

Asp-167 is an active-site residue.

The protein belongs to the protein kinase superfamily. KdkA/RfaP family.

The protein localises to the cell inner membrane. It catalyses the reaction an alpha-Kdo-(2-&gt;6)-lipid IVA + ATP = a 4-O-phospho-alpha-Kdo-(2-&gt;6)-lipid IVA + ADP + H(+). Its pathway is bacterial outer membrane biogenesis; LPS core biosynthesis. In terms of biological role, catalyzes the ATP-dependent phosphorylation of the 3-deoxy-D-manno-octulosonic acid (Kdo) residue in Kdo-lipid IV(A) at the 4-OH position. This Vibrio vulnificus (strain YJ016) protein is 3-deoxy-D-manno-octulosonic acid kinase.